We begin with the raw amino-acid sequence, 231 residues long: CLAVATA3/ESR (CLE)-related protein 4B-2 (231 aa).

Positions 1–21 are cleaved as a signal peptide; the sequence is MATNTMLCLLILSVVLALAFA. The required for secretion from the host cytoplasm to the host apoplasm stretch occupies residues 21–83; the sequence is ATNKKGDEEP…SNQLPNNNWM (63 aa). N-linked (GlcNAc...) asparagine glycosylation occurs at Asn-32. The segment at 116–231 is disordered; that stretch reads RKTGMHSQRH…APAGPDPIHH (116 aa). Basic and acidic residues-rich tracts occupy residues 125-137 and 144-221; these read HHEETTLEQEKRV and PIHH…EKRG. The stretch at 127–135 is one A-1 repeat; the sequence is EETTLEQEK. The segment at 127 to 219 is 5 X approximate repeat A; it reads EETTLEQEKR…HEETTFEQEK (93 aa). One copy of the CLE-1 repeat lies at 136–147; the sequence is RVAGAGPDPIHH. The 5 X approximate repeat CLE stretch occupies residues 136-231; sequence RVAGAGPDPI…APAGPDPIHH (96 aa). An A-2 repeat occupies 148–156; the sequence is EETTLEQEK. The stretch at 157–168 is one CLE-2 repeat; the sequence is RAVPAGPDPKHH. Residues 169–177 form an A-3 repeat; the sequence is EETTLEQEK. Residues 178–189 form a CLE-3 repeat; sequence RAVPAGPDPKHH. An A-4 repeat occupies 190-198; that stretch reads EETTLEQEK. The CLE-4 repeat unit spans residues 199–210; it reads RAVPAGPDPKHH. An A-5 repeat occupies 211-219; that stretch reads EETTFEQEK. The CLE-5 repeat unit spans residues 220–231; sequence RGAPAGPDPIHH.

This sequence belongs to the CLV3/ESR signal peptide family. Highly expressed exclusively within the dorsal esophageal gland cell during syncytium formation in host plants.

The protein resides in the secreted. Its subcellular location is the host cytoplasm. It is found in the host extracellular space. The protein localises to the extracellular space. It localises to the apoplast. Its function is as follows. Mimics host plant CLE extracellular signal peptides that regulate cell fate. May play a role in the differentiation or division of feeding cells (syncytia) induced in plant roots during infection. The polypeptide is CLAVATA3/ESR (CLE)-related protein 4B-2 (CLE-4B-2) (Globodera rostochiensis (Golden nematode worm)).